The sequence spans 304 residues: Acetylglutamate kinase (304 aa).

Residues 72–73 (GG), Arg-94, and Asn-199 contribute to the substrate site.

This sequence belongs to the acetylglutamate kinase family. ArgB subfamily.

Its subcellular location is the cytoplasm. The enzyme catalyses N-acetyl-L-glutamate + ATP = N-acetyl-L-glutamyl 5-phosphate + ADP. It functions in the pathway amino-acid biosynthesis; L-arginine biosynthesis; N(2)-acetyl-L-ornithine from L-glutamate: step 2/4. In terms of biological role, catalyzes the ATP-dependent phosphorylation of N-acetyl-L-glutamate. This Methylobacterium nodulans (strain LMG 21967 / CNCM I-2342 / ORS 2060) protein is Acetylglutamate kinase.